The primary structure comprises 220 residues: MTSFGTLYTYMPNARVFKILAAAKLNNLIIEIPAYQHGVTNKSAEFLSKFPAGKVPAFEGPDGFCLVESDAIAQYVAQSGPQASQLLGQDAMSSAKIRQWISFFAEEIYPTVLDLVMWRVGLGAFDETTEIKALAQLAYGLSVLEKHLNPGILLTGDELTLADLTGASTLLWAFMHIIDEPMRQQYPNVVAWYLKVVQNEEVKEVFGKPNLIEKRRIGAK.

In terms of domain architecture, GST N-terminal spans 3-84 (SFGTLYTYMP…YVAQSGPQAS (82 aa)). Residues 90 to 220 (DAMSSAKIRQ…LIEKRRIGAK (131 aa)) enclose the GST C-terminal domain.

The protein belongs to the GST superfamily.

Glutathione S-transferase-like protein; part of the gene cluster that mediates the biosynthesis of the mycotoxin fusarin C. Within the cluster, FUS1, FUS2, FUS8 and FUS9 are sufficient for fusarin production. The other FUS cluster members are not essential for fusarin C biosynthesis. In Gibberella moniliformis (strain M3125 / FGSC 7600) (Maize ear and stalk rot fungus), this protein is Glutathione S-transferase-like protein FUS3.